Reading from the N-terminus, the 514-residue chain is 2-isopropylmalate synthase (514 aa).

One can recognise a Pyruvate carboxyltransferase domain in the interval 5–268 (LIIFDTTLRD…DVGLDTTQIV (264 aa)). Mn(2+)-binding residues include aspartate 14, histidine 202, histidine 204, and asparagine 239. A regulatory domain region spans residues 395-514 (KFVSLSQRSE…KDDKLNPQRS (120 aa)).

The protein belongs to the alpha-IPM synthase/homocitrate synthase family. LeuA type 1 subfamily. In terms of assembly, homodimer. It depends on Mn(2+) as a cofactor.

Its subcellular location is the cytoplasm. It catalyses the reaction 3-methyl-2-oxobutanoate + acetyl-CoA + H2O = (2S)-2-isopropylmalate + CoA + H(+). Its pathway is amino-acid biosynthesis; L-leucine biosynthesis; L-leucine from 3-methyl-2-oxobutanoate: step 1/4. Catalyzes the condensation of the acetyl group of acetyl-CoA with 3-methyl-2-oxobutanoate (2-ketoisovalerate) to form 3-carboxy-3-hydroxy-4-methylpentanoate (2-isopropylmalate). This is 2-isopropylmalate synthase from Burkholderia ambifaria (strain MC40-6).